We begin with the raw amino-acid sequence, 531 residues long: Cytochrome P450 monooxygenase ffsD (531 aa).

The helical transmembrane segment at valine 40–valine 60 threads the bilayer. A heme-binding site is contributed by cysteine 475.

Belongs to the cytochrome P450 family. Heme serves as cofactor.

The protein localises to the membrane. It participates in mycotoxin biosynthesis. In terms of biological role, cytochrome P450 monooxygenase; part of the gene cluster that mediates the biosynthesis of the cytotoxic leucine-containing cytochalasans, including aspochalasin C, aspochalasin E, TMC-169, flavichalasine F, aspergillin PZ, aspochalasin M and flavichalasine G. The first step in the pathway is catalyzed by the hybrid PKS-NRPS ffsA that utilizes 8 units of malonyl-CoA to iteratively assemble the octaketide chain before addition of L-leucine by the C-terminal NRPS modules. Because ffsA lacks a designated enoylreductase (ER) domain, the required activity is provided the enoyl reductase fssC. The methyltransferase (MT) domain of ffsA catalyzes the alpha-methylation at C10 and C14 using S-adenosyl-L-methionine as the methyl-donating cosubstrate. Reduction by the hydrolyase ffsE, followed by dehydration and intra-molecular Diels-Alder cyclization by the Diels-Alderase ffsF then yield the required isoindolone-fused macrocycle. A number of oxidative steps catalyzed by the tailoring cytochrome P450 monooxygenase ffsD, the FAD-linked oxidoreductase ffsJ and the short-chain dehydrogenase/reductase ffsI, are further required to afford the final products. This Aspergillus flavipes protein is Cytochrome P450 monooxygenase ffsD.